A 302-amino-acid polypeptide reads, in one-letter code: RNA polymerase II holoenzyme cyclin-like subunit (302 aa).

Residues 53–142 (QQLIKLGKRM…LGECEFSLIS (90 aa)) enclose the Cyclin N-terminal domain.

This sequence belongs to the cyclin family. Cyclin C subfamily. In terms of assembly, component of the srb8-11 complex, a regulatory module of the Mediator complex.

It is found in the nucleus. Functionally, component of the srb8-11 complex. The srb8-11 complex is a regulatory module of the Mediator complex which is itself involved in regulation of basal and activated RNA polymerase II-dependent transcription. The srb8-11 complex may be involved in the transcriptional repression of a subset of genes regulated by Mediator. It may inhibit the association of the Mediator complex with RNA polymerase II to form the holoenzyme complex. The srb8-11 complex phosphorylates the C-terminal domain (CTD) of the largest subunit of RNA polymerase II. The polypeptide is RNA polymerase II holoenzyme cyclin-like subunit (ssn8) (Aspergillus clavatus (strain ATCC 1007 / CBS 513.65 / DSM 816 / NCTC 3887 / NRRL 1 / QM 1276 / 107)).